A 525-amino-acid polypeptide reads, in one-letter code: MEAPTLSELEGLRYSELQKLAKTAGLKANLKADKLLKALKVHFYPESKDESPDYDGGSSLTDTDELNSSQEKDEPVSVSFVTHRRGRGRKPLKNYDTPKDEFLTVSVGTGTESLASETDNTQDQNCLESKKKKVSPPTIDNKHRKRSRSEDTSKQNNSETTEKRQKKASDITSVPSAGKIPRYAGRLSKPESKPSTPNFKKLHEAHFKKMESIDKYMERKQKRLDTVSSSIQEMKMLTKKSNLLKLVEKTPVSDIKKPVKSRLSLLSSLPPTTGASPSRTPTNQRRSGRFSAANKSILFDRSGFKPSVLSSSKMNVRFSEATKDNEHKRSLIKTPARKSSSFLAITPESEPRQMLPNVKKTPARKSLSVLAVTPESEPKQMLPSVKKNEPMATPEKAKKTDLNTTIQPSTVILESTCPQNKEIAITPFKFTAQTTETPNTNKKGRFDLQASLSRPLGYQPHKGKLKPWGGSEENKCGSNNNVSVLKNNFKQPHLQTREDRRKQHEQDRKGKRDQTLGTRRGVPVQ.

Disordered regions lie at residues 46-205, 248-292, 373-397, and 451-525; these read ESKD…LHEA, EKTP…RFSA, TPES…PEKA, and SLSR…VPVQ. Residues 58-69 are compositionally biased toward polar residues; it reads SSLTDTDELNSS. Residues 82–92 show a composition bias toward basic residues; the sequence is THRRGRGRKPL. Positions 106–127 are enriched in polar residues; sequence SVGTGTESLASETDNTQDQNCL. The segment covering 160–169 has biased composition (basic and acidic residues); the sequence is TTEKRQKKAS. A compositionally biased stretch (polar residues) spans 270–285; sequence PPTTGASPSRTPTNQR. A compositionally biased stretch (polar residues) spans 476–494; the sequence is CGSNNNVSVLKNNFKQPHL. Positions 495 to 514 are enriched in basic and acidic residues; it reads QTREDRRKQHEQDRKGKRDQ.

It belongs to the NUSAP family. As to quaternary structure, interacts with DNA. Interacts with microtubules, ipo7, kpna2 and kpnb1. Microtubule stabilization is inhibited by ipo7 and kpna2, while microtubule bundling is inhibited by kpnb1. Active GTP-bound ran causes dissociation of ipo7 and kpnb1.

The protein resides in the cytoplasm. It localises to the nucleus. The protein localises to the cytoskeleton. Its subcellular location is the spindle. Its function is as follows. Microtubule-associated protein with the capacity to bundle and stabilize microtubules. May associate with chromosomes and promote the organization of meiotic or mitotic spindle microtubules around them. The polypeptide is Nucleolar and spindle-associated protein 1-A (nusap1-a) (Xenopus laevis (African clawed frog)).